A 129-amino-acid chain; its full sequence is Follitropin subunit beta (129 aa).

A signal peptide spans 1-20 (MKSLQFCFLFCCWKAICCNS). 6 disulfides stabilise this stretch: Cys-21/Cys-69, Cys-35/Cys-84, Cys-38/Cys-122, Cys-46/Cys-100, Cys-50/Cys-102, and Cys-105/Cys-112. 2 N-linked (GlcNAc...) asparagine glycosylation sites follow: Asn-25 and Asn-42.

This sequence belongs to the glycoprotein hormones subunit beta family. In terms of assembly, heterodimer. The active follitropin is a heterodimer composed of an alpha chain/CGA shared with other hormones and a unique beta chain/FSHB shown here.

The protein resides in the secreted. Its function is as follows. Together with the alpha chain CGA constitutes follitropin, the follicle-stimulating hormone, and provides its biological specificity to the hormone heterodimer. Binds FSHR, a G protein-coupled receptor, on target cells to activate downstream signaling pathways. Follitropin is involved in follicle development and spermatogenesis in reproductive organs. The sequence is that of Follitropin subunit beta (FSHB) from Sus scrofa (Pig).